The chain runs to 455 residues: Phosphoglucosamine mutase (455 aa).

Serine 103 functions as the Phosphoserine intermediate in the catalytic mechanism. Positions 103, 243, 245, and 247 each coordinate Mg(2+). Serine 103 carries the phosphoserine modification.

It belongs to the phosphohexose mutase family. It depends on Mg(2+) as a cofactor. Activated by phosphorylation.

It catalyses the reaction alpha-D-glucosamine 1-phosphate = D-glucosamine 6-phosphate. In terms of biological role, catalyzes the conversion of glucosamine-6-phosphate to glucosamine-1-phosphate. This Halorhodospira halophila (strain DSM 244 / SL1) (Ectothiorhodospira halophila (strain DSM 244 / SL1)) protein is Phosphoglucosamine mutase.